Consider the following 229-residue polypeptide: Potassium/proton antiporter CemA (229 aa).

Transmembrane regions (helical) follow at residues Phe7–Phe27, Ile114–Leu134, Ile154–Ile174, and Ile189–Ile209.

Belongs to the CemA family.

It localises to the plastid. The protein resides in the chloroplast inner membrane. The catalysed reaction is K(+)(in) + H(+)(out) = K(+)(out) + H(+)(in). Functionally, contributes to K(+)/H(+) antiport activity by supporting proton efflux to control proton extrusion and homeostasis in chloroplasts in a light-dependent manner to modulate photosynthesis. Prevents excessive induction of non-photochemical quenching (NPQ) under continuous-light conditions. Indirectly promotes efficient inorganic carbon uptake into chloroplasts. This is Potassium/proton antiporter CemA from Platanus occidentalis (Sycamore).